The chain runs to 93 residues: uncharacterized protein (93 aa).

This sequence belongs to the SIMIBI class G3E GTPase family. ArgK/MeaB subfamily.

This is an uncharacterized protein from Streptomyces virginiae (Streptomyces cinnamonensis).